The chain runs to 168 residues: I-Kappa-B like protein G2 (168 aa).

2 ANK repeats span residues 56-88 (SQRQCVHIVVCEDKVNAIKKLKVLLEMGADING) and 93-123 (GGNTPLHLAVHSNNYKLVKWLCKQPSINKTA).

This sequence belongs to the polydnaviridae I-Kappa-B-like protein family.

Suppresses the host immune response through NF-kappa-B inactivation. Possesses ankyrin repeat domains required for NF-kappa-B binding but lacks the regulatory regions required for dissociation from NF-kappa-B and degradation. Therefore, prevents host NF-kappa-B release and subsequent activation. This chain is I-Kappa-B like protein G2 (G4), found in Microplitis demolitor (Parasitoid wasp).